The chain runs to 476 residues: Major facilitator superfamily domain-containing protein 12 (476 aa).

Position 1 is an N-acetylmethionine (Met-1). Over 1 to 25 (MSPPSDDAGPGPPRTLSLAARLSFA) the chain is Cytoplasmic. The helical transmembrane segment at 26–46 (VGHFLNDLCAGMWFTYLLLFL) threads the bilayer. Over 47–55 (HSVRGYSSR) the chain is Lumenal. The chain crosses the membrane as a helical span at residues 56–76 (GAGLLLLLGQVADGLCTPLVG). Residues 77–94 (YEADRASCVRCGPRKAWH) are Cytoplasmic-facing. A helical transmembrane segment spans residues 95–115 (LAGTVCVLLSFPFIFSPCLGC). Over 116–121 (GEATPE) the chain is Lumenal. A helical membrane pass occupies residues 122 to 142 (WAALLYYGPFIVVFQFGWAAT). The Cytoplasmic segment spans residues 143–167 (QIAHLSLIPELVTSDHEKVELTALR). The chain crosses the membrane as a helical span at residues 168-188 (YAFTVVANITVYGAAWLLLHL). The Lumenal portion of the chain corresponds to 189-213 (QGSAHGEQDISVGDQLGVQDVPVFR). The helical transmembrane segment at 214–234 (NLALLVVGVGAIFSLLFHLGT) threads the bilayer. Topologically, residues 235–284 (KEGHRSQHWGNEPNEHTPLVAPAAQPLLLWKHWLREPAFYQVGMLYMTTR) are cytoplasmic. Thr-251 carries the post-translational modification Phosphothreonine. A helical transmembrane segment spans residues 285–305 (LIVNLSQTYIAMYLTYSLSLP). Residue Lys-306 is a topological domain, lumenal. The helical transmembrane segment at 307–327 (KFIATIPLVMYLSGFFSSFLM) threads the bilayer. Residues 328 to 343 (KPVNRRIGRNMTYFTG) are Cytoplasmic-facing. Helical transmembrane passes span 344–364 (LLVILAFAAWVALADNLGVAV) and 365–385 (YGAAVLLGAGCATILVTSLAM). The Cytoplasmic portion of the chain corresponds to 386–398 (TADLIGPHTHSGA). A helical transmembrane segment spans residues 399–419 (FVYGAMSFSDKVANGLAVMAV). The Lumenal portion of the chain corresponds to 420–444 (QSLHPCPSELCCGACISFYHWVMTA). Residues 445–465 (VTGGVGVAAALALCSLLIWPI) form a helical membrane-spanning segment. At 466–476 (RIRNRDPRDRP) the chain is on the cytoplasmic side.

The protein belongs to the major facilitator superfamily. Phosphorylation at Thr-251 by MTOR via mTORC1 pathway promotes cysteine transport in lysosomes, thereby regulating lysosomal cysteine and cystine storage and redox homeostasis.

The protein resides in the melanosome membrane. It localises to the lysosome membrane. The enzyme catalyses L-cysteine(in) = L-cysteine(out). Its function is as follows. Transporter that mediates the import of cysteine into melanosomes, thereby regulating skin/hair pigmentation. In melanosomes, cysteine import is required both for normal levels of cystine, the oxidized dimer of cysteine, and provide cysteine for the production of the cysteinyldopas used in pheomelanin synthesis, thereby regulating skin/hair pigmentation. Also catalyzes import of cysteine into lysosomes in non-pigmented cells, regulating lysosomal cystine and cysteine storage, which is essnetial for redox homeostasis. In Mus musculus (Mouse), this protein is Major facilitator superfamily domain-containing protein 12.